We begin with the raw amino-acid sequence, 191 residues long: CASP-like protein 2U3 (191 aa).

The Cytoplasmic portion of the chain corresponds to 1-25; that stretch reads MGAYDGAEAPRAAPASTAANSRPSR. The helical transmembrane segment at 26-46 threads the bilayer; that stretch reads LLLLHSLLLRLVAVVVSILVI. The Extracellular portion of the chain corresponds to 47–68; the sequence is AVMVHAKQRVMIFKAEWDNSKA. A helical membrane pass occupies residues 69–89; sequence FVALVAISAICLGYSFLQFIL. Over 90–114 the chain is Cytoplasmic; the sequence is SAFHLCSKSWKSPTKCWAWMNFIAD. A helical transmembrane segment spans residues 115–135; it reads QILTYAMLGAAAAAAELAYIA. The Extracellular segment spans residues 136–157; the sequence is KNGSSRAQWQPICSTFNTFCTR. An N-linked (GlcNAc...) asparagine glycan is attached at Asn-137. Residues 158 to 178 traverse the membrane as a helical segment; sequence AGASIILSFIAVLALANSSAI. The Cytoplasmic segment spans residues 179 to 191; the sequence is SAYHLFRRPSSSV.

It belongs to the Casparian strip membrane proteins (CASP) family. As to quaternary structure, homodimer and heterodimers.

The protein localises to the cell membrane. The polypeptide is CASP-like protein 2U3 (Selaginella moellendorffii (Spikemoss)).